Consider the following 102-residue polypeptide: ATP-dependent Clp protease adapter protein ClpS (102 aa).

Belongs to the ClpS family. As to quaternary structure, binds to the N-terminal domain of the chaperone ClpA.

Functionally, involved in the modulation of the specificity of the ClpAP-mediated ATP-dependent protein degradation. The protein is ATP-dependent Clp protease adapter protein ClpS of Shewanella loihica (strain ATCC BAA-1088 / PV-4).